The sequence spans 89 residues: Small ribosomal subunit protein bS20 (89 aa).

A disordered region spans residues 1–26 (MANIKASKKDALTSEKRRKKNSSRRS). Residues 16–26 (KRRKKNSSRRS) show a composition bias toward basic residues.

Belongs to the bacterial ribosomal protein bS20 family.

Functionally, binds directly to 16S ribosomal RNA. The protein is Small ribosomal subunit protein bS20 of Buchnera aphidicola subsp. Acyrthosiphon pisum (strain 5A).